The chain runs to 434 residues: MSADYWNSSQRNQWQLTRFSLLEARRRVLLLERKMIQNGLIKDYPNIIYDYNMRIYLHNLLIKLGRRLNIRQIALATAEIYLTRFLTRVSLKEINVYLLITTCIYVACKIEECPQHIRLILSEARNIWPEYIPHDVTKLAEFEFYLIEEMDSYLLLHHPYKSLMQINEFLSNNYNVFGFKLTVEELQNAWSLINDSYITDLHLLLPPHTIAVAAIYITVVLKKNLSRVRQGNNNDNNININTMHISTGSSTNPININNNNNTNTSNNNGTTSTTTTTTAQETQVLGQDDNTEMNIDDLMNLTKSSNNSQDKSDDKMDIDNPLQSQVNLSQIQNQTQHQHQESTHNNTSSTNTGRNGINGQISQSNQELNNFDLDILDEDTIKINKFMNFLEHSHINLDEVVEAVQDMMNMYVLWNRYNEQGVKKALQVMLLNRI.

Positions 23 to 155 constitute a Cyclin N-terminal domain; the sequence is EARRRVLLLE…LIEEMDSYLL (133 aa). Residues 248–278 are compositionally biased toward low complexity; sequence GSSTNPININNNNNTNTSNNNGTTSTTTTTT. Disordered stretches follow at residues 248 to 292, 301 to 320, and 330 to 362; these read GSST…DNTE, LTKSSNNSQDKSDDKMDIDN, and QIQNQTQHQHQESTHNNTSSTNTGRNGINGQIS. Low complexity predominate over residues 330–359; the sequence is QIQNQTQHQHQESTHNNTSSTNTGRNGING.

This sequence belongs to the cyclin family. Cyclin C subfamily. Component of the SRB8-11 complex, a regulatory module of the Mediator complex.

It is found in the nucleus. Component of the SRB8-11 complex. The SRB8-11 complex is a regulatory module of the Mediator complex which is itself involved in regulation of basal and activated RNA polymerase II-dependent transcription. The SRB8-11 complex may be involved in the transcriptional repression of a subset of genes regulated by Mediator. It may inhibit the association of the Mediator complex with RNA polymerase II to form the holoenzyme complex. The SRB8-11 complex phosphorylates the C-terminal domain (CTD) of the largest subunit of RNA polymerase II. The polypeptide is RNA polymerase II holoenzyme cyclin-like subunit (SSN8) (Candida albicans (strain SC5314 / ATCC MYA-2876) (Yeast)).